Here is a 42-residue protein sequence, read N- to C-terminus: Purine nucleoside phosphorylase DeoD-type (42 aa).

8-9 (SD) serves as a coordination point for a purine D-ribonucleoside. The Proton donor role is filled by Asp9.

This sequence belongs to the PNP/UDP phosphorylase family. As to quaternary structure, homohexamer; trimer of homodimers.

The catalysed reaction is a purine D-ribonucleoside + phosphate = a purine nucleobase + alpha-D-ribose 1-phosphate. It catalyses the reaction a purine 2'-deoxy-D-ribonucleoside + phosphate = a purine nucleobase + 2-deoxy-alpha-D-ribose 1-phosphate. Its function is as follows. Catalyzes the reversible phosphorolytic breakdown of the N-glycosidic bond in the beta-(deoxy)ribonucleoside molecules, with the formation of the corresponding free purine bases and pentose-1-phosphate. The chain is Purine nucleoside phosphorylase DeoD-type from Mycoplasmoides pirum (Mycoplasma pirum).